Here is a 279-residue protein sequence, read N- to C-terminus: Tryptophan synthase alpha chain (279 aa).

Catalysis depends on proton acceptor residues Glu50 and Asp61.

This sequence belongs to the TrpA family. Tetramer of two alpha and two beta chains.

It carries out the reaction (1S,2R)-1-C-(indol-3-yl)glycerol 3-phosphate + L-serine = D-glyceraldehyde 3-phosphate + L-tryptophan + H2O. The protein operates within amino-acid biosynthesis; L-tryptophan biosynthesis; L-tryptophan from chorismate: step 5/5. The alpha subunit is responsible for the aldol cleavage of indoleglycerol phosphate to indole and glyceraldehyde 3-phosphate. In Brucella suis (strain ATCC 23445 / NCTC 10510), this protein is Tryptophan synthase alpha chain.